Consider the following 214-residue polypeptide: Probable transaldolase (214 aa).

Residue Lys-83 is the Schiff-base intermediate with substrate of the active site.

It belongs to the transaldolase family. Type 3B subfamily.

Its subcellular location is the cytoplasm. It carries out the reaction D-sedoheptulose 7-phosphate + D-glyceraldehyde 3-phosphate = D-erythrose 4-phosphate + beta-D-fructose 6-phosphate. It functions in the pathway carbohydrate degradation; pentose phosphate pathway; D-glyceraldehyde 3-phosphate and beta-D-fructose 6-phosphate from D-ribose 5-phosphate and D-xylulose 5-phosphate (non-oxidative stage): step 2/3. In terms of biological role, transaldolase is important for the balance of metabolites in the pentose-phosphate pathway. The sequence is that of Probable transaldolase from Streptococcus equi subsp. zooepidemicus (strain H70).